Reading from the N-terminus, the 75-residue chain is U6-lycotoxin-Ls1d (75 aa).

Positions 1-21 (MKLLLFTALVLVVISLIEVEA) are cleaved as a signal peptide. Residues 22–25 (ENER) constitute a propeptide that is removed on maturation.

It belongs to the neurotoxin 19 (CSTX) family. 06 (U6-Lctx) subfamily. Post-translationally, contains 4 disulfide bonds. In terms of tissue distribution, expressed by the venom gland.

It localises to the secreted. The protein is U6-lycotoxin-Ls1d of Lycosa singoriensis (Wolf spider).